The chain runs to 387 residues: Large ribosomal subunit protein uL3 (387 aa).

Serine 24 bears the Phosphoserine mark. Lysine 39 is covalently cross-linked (Glycyl lysine isopeptide (Lys-Gly) (interchain with G-Cter in ubiquitin)). Position 103 is a phosphothreonine (threonine 103). Residue lysine 136 forms a Glycyl lysine isopeptide (Lys-Gly) (interchain with G-Cter in ubiquitin) linkage. Serine 156 is subject to Phosphoserine. Histidine 243 is modified (pros-methylhistidine). Residue serine 297 is modified to Phosphoserine.

Belongs to the universal ribosomal protein uL3 family. Component of the large ribosomal subunit (LSU). Mature yeast ribosomes consist of a small (40S) and a large (60S) subunit. The 40S small subunit contains 1 molecule of ribosomal RNA (18S rRNA) and 33 different proteins (encoded by 57 genes). The large 60S subunit contains 3 rRNA molecules (25S, 5.8S and 5S rRNA) and 46 different proteins (encoded by 81 genes). uL3 forms together with ES39L one of the contact sites for the signal recognition particle that targets ribosomes to the endoplasmic reticulum membrane. Post-translationally, methylation at His-243 by HPM1 is required for proper 60S subunit assembly and promotes translational elongation fidelity.

It localises to the cytoplasm. In terms of biological role, component of the ribosome, a large ribonucleoprotein complex responsible for the synthesis of proteins in the cell. The small ribosomal subunit (SSU) binds messenger RNAs (mRNAs) and translates the encoded message by selecting cognate aminoacyl-transfer RNA (tRNA) molecules. The large subunit (LSU) contains the ribosomal catalytic site termed the peptidyl transferase center (PTC), which catalyzes the formation of peptide bonds, thereby polymerizing the amino acids delivered by tRNAs into a polypeptide chain. The nascent polypeptides leave the ribosome through a tunnel in the LSU and interact with protein factors that function in enzymatic processing, targeting, and the membrane insertion of nascent chains at the exit of the ribosomal tunnel. uL3 plays a role in coordinating processes of accommodating the aminoacyl-tRNA in the PTC. This Saccharomyces cerevisiae (strain ATCC 204508 / S288c) (Baker's yeast) protein is Large ribosomal subunit protein uL3.